A 224-amino-acid chain; its full sequence is uncharacterized protein (224 aa).

Residues Met-1–Ala-19 form the signal peptide.

The protein belongs to the periplasmic pilus chaperone family.

The protein localises to the periplasm. Functionally, could be required for the biogenesis of a putative fimbria. This is an uncharacterized protein from Escherichia coli (strain K12).